The chain runs to 346 residues: Methylthioribose-1-phosphate isomerase (346 aa).

Substrate is bound by residues 46–48, Arg-89, and Gln-196; that span reads RGA. Asp-237 acts as the Proton donor in catalysis. Position 247–248 (247–248) interacts with substrate; the sequence is NK.

It belongs to the eIF-2B alpha/beta/delta subunits family. MtnA subfamily.

It carries out the reaction 5-(methylsulfanyl)-alpha-D-ribose 1-phosphate = 5-(methylsulfanyl)-D-ribulose 1-phosphate. Its pathway is amino-acid biosynthesis; L-methionine biosynthesis via salvage pathway; L-methionine from S-methyl-5-thio-alpha-D-ribose 1-phosphate: step 1/6. Functionally, catalyzes the interconversion of methylthioribose-1-phosphate (MTR-1-P) into methylthioribulose-1-phosphate (MTRu-1-P). The protein is Methylthioribose-1-phosphate isomerase of Geobacter metallireducens (strain ATCC 53774 / DSM 7210 / GS-15).